The sequence spans 266 residues: Putative pyruvate, phosphate dikinase regulatory protein (266 aa).

Position 149 to 156 (149 to 156 (GVSRTSKT)) interacts with ADP.

Belongs to the pyruvate, phosphate/water dikinase regulatory protein family. PDRP subfamily.

It catalyses the reaction N(tele)-phospho-L-histidyl/L-threonyl-[pyruvate, phosphate dikinase] + ADP = N(tele)-phospho-L-histidyl/O-phospho-L-threonyl-[pyruvate, phosphate dikinase] + AMP + H(+). The enzyme catalyses N(tele)-phospho-L-histidyl/O-phospho-L-threonyl-[pyruvate, phosphate dikinase] + phosphate + H(+) = N(tele)-phospho-L-histidyl/L-threonyl-[pyruvate, phosphate dikinase] + diphosphate. Functionally, bifunctional serine/threonine kinase and phosphorylase involved in the regulation of the pyruvate, phosphate dikinase (PPDK) by catalyzing its phosphorylation/dephosphorylation. The sequence is that of Putative pyruvate, phosphate dikinase regulatory protein from Halothermothrix orenii (strain H 168 / OCM 544 / DSM 9562).